We begin with the raw amino-acid sequence, 158 residues long: Cyclic pyranopterin monophosphate synthase (158 aa).

Residues leucine 75–histidine 77 and methionine 113–glutamate 114 each bind substrate. The active site involves aspartate 128.

It belongs to the MoaC family. As to quaternary structure, homohexamer; trimer of dimers.

It carries out the reaction (8S)-3',8-cyclo-7,8-dihydroguanosine 5'-triphosphate = cyclic pyranopterin phosphate + diphosphate. It participates in cofactor biosynthesis; molybdopterin biosynthesis. Its function is as follows. Catalyzes the conversion of (8S)-3',8-cyclo-7,8-dihydroguanosine 5'-triphosphate to cyclic pyranopterin monophosphate (cPMP). This Acidiphilium cryptum (strain JF-5) protein is Cyclic pyranopterin monophosphate synthase.